The chain runs to 724 residues: Small conductance calcium-activated potassium channel protein 3 (724 aa).

The segment covering 1 to 11 (MDTSGHFHDSG) has biased composition (basic and acidic residues). Disordered regions lie at residues 1–161 (MDTS…RDSN) and 232–251 (ATHN…FPKA). Over residues 34–58 (QPPPPPPPPAPPAAPQQPPGPPLQP) the composition is skewed to pro residues. Over residues 59-88 (QPLQLQQQQQQQQQQPPHPLSQLAQLQSQP) the composition is skewed to low complexity. Polar residues predominate over residues 105–125 (PSSNSTAILHPSSRQGSQLNL). A compositionally biased stretch (low complexity) spans 131–140 (GHSPSSTATS). Phosphoserine is present on serine 160. Positions 232-249 (ATHNHQHAGTTASSTTFP) are enriched in polar residues. A helical transmembrane segment spans residues 281–301 (LIFGMFGIVVMVIETELSWGL). Residues 308-328 (FSLALKCLISLSTIILLGLII) form a helical membrane-spanning segment. Residues 359–379 (ISLEMLVCAIHPIPGEYKFFW) form a helical membrane-spanning segment. A helical membrane pass occupies residues 398–418 (IILSIPMFLRLYLIARVMLLH). Residues 447–467 (LMTICPGTVLLVFSISLWIIA) form a helical membrane-spanning segment. Residues 487–507 (FLGAMWLISITFLSIGYGDMV) constitute an intramembrane region (pore-forming). A helical membrane pass occupies residues 516–536 (VCLLTGIMGAGCTALVVAVVA). Positions 554 to 630 (DTQLTKRIKN…LVDLSKMQNV (77 aa)) are calmodulin-binding. A coiled-coil region spans residues 635–662 (ITELNDRSEDLEKQIGSLESKLEHLTAS). The tract at residues 702–724 (LSDSPIGVSSTSFPTPYTSSSSC) is disordered. The span at 710 to 724 (SSTSFPTPYTSSSSC) shows a compositional bias: low complexity.

It belongs to the potassium channel KCNN family. KCa2.3/KCNN3 subfamily. As to quaternary structure, homodimer. Heteromultimer with KCNN2 or KCNN1; this modulates plasma membrane expression and consequently the small conductance calcium-activated potassium channel activity. The complex is composed of 4 channel subunits each of which binds to a calmodulin subunit which regulates the channel activity through calcium-binding. Interacts with CALM1.

It is found in the cell membrane. It localises to the cytoplasm. Its subcellular location is the myofibril. The protein localises to the sarcomere. The protein resides in the z line. The catalysed reaction is K(+)(in) = K(+)(out). Its activity is regulated as follows. Inhibited by bee venom neurotoxin apamin. Its function is as follows. Small conductance calcium-activated potassium channel that mediates the voltage-independent transmembrane transfer of potassium across the cell membrane through a constitutive interaction with calmodulin which binds the intracellular calcium allowing its opening. The current is characterized by a voltage-independent activation, an intracellular calcium concentration increase-dependent activation and a single-channel conductance of 10 picosiemens. Also presents an inwardly rectifying current, thus reducing its already small outward conductance of potassium ions, which is particularly the case when the membrane potential displays positive values, above + 20 mV. Activation is followed by membrane hyperpolarization. Thought to regulate neuronal excitability by contributing to the slow component of synaptic afterhyperpolarization. The polypeptide is Small conductance calcium-activated potassium channel protein 3 (Sus scrofa (Pig)).